Consider the following 177-residue polypeptide: ATP synthase subunit delta (177 aa).

Belongs to the ATPase delta chain family. F-type ATPases have 2 components, F(1) - the catalytic core - and F(0) - the membrane proton channel. F(1) has five subunits: alpha(3), beta(3), gamma(1), delta(1), epsilon(1). F(0) has three main subunits: a(1), b(2) and c(10-14). The alpha and beta chains form an alternating ring which encloses part of the gamma chain. F(1) is attached to F(0) by a central stalk formed by the gamma and epsilon chains, while a peripheral stalk is formed by the delta and b chains.

The protein resides in the cell inner membrane. Its function is as follows. F(1)F(0) ATP synthase produces ATP from ADP in the presence of a proton or sodium gradient. F-type ATPases consist of two structural domains, F(1) containing the extramembraneous catalytic core and F(0) containing the membrane proton channel, linked together by a central stalk and a peripheral stalk. During catalysis, ATP synthesis in the catalytic domain of F(1) is coupled via a rotary mechanism of the central stalk subunits to proton translocation. In terms of biological role, this protein is part of the stalk that links CF(0) to CF(1). It either transmits conformational changes from CF(0) to CF(1) or is implicated in proton conduction. The sequence is that of ATP synthase subunit delta from Sulfurimonas denitrificans (strain ATCC 33889 / DSM 1251) (Thiomicrospira denitrificans (strain ATCC 33889 / DSM 1251)).